We begin with the raw amino-acid sequence, 200 residues long: Large ribosomal subunit protein uL4 (200 aa).

The disordered stretch occupies residues 38 to 68; it reads GRQGSKQQKTRSDVRGGGKRPWRQKGTGRAR. Over residues 54–65 the composition is skewed to basic residues; that stretch reads GGKRPWRQKGTG.

It belongs to the universal ribosomal protein uL4 family. In terms of assembly, part of the 50S ribosomal subunit.

Functionally, one of the primary rRNA binding proteins, this protein initially binds near the 5'-end of the 23S rRNA. It is important during the early stages of 50S assembly. It makes multiple contacts with different domains of the 23S rRNA in the assembled 50S subunit and ribosome. In terms of biological role, forms part of the polypeptide exit tunnel. This Pseudomonas syringae pv. tomato (strain ATCC BAA-871 / DC3000) protein is Large ribosomal subunit protein uL4.